The sequence spans 562 residues: Potassium-transporting ATPase potassium-binding subunit (562 aa).

A run of 12 helical transmembrane segments spans residues 5–25, 63–83, 132–152, 175–195, 250–270, 279–299, 327–347, 356–376, 379–399, 416–436, 483–503, and 526–546; these read AFLL…PLGS, AAAI…LLMA, GLTV…FALI, LYVL…QGVL, LSNI…CFAF, QGHA…AVVM, FGVL…TGAV, ALGG…FGGV, GLYG…LMIG, MTAL…ALAL, VLLA…VLAI, and LFIG…FIPA.

It belongs to the KdpA family. As to quaternary structure, the system is composed of three essential subunits: KdpA, KdpB and KdpC.

It localises to the cell inner membrane. In terms of biological role, part of the high-affinity ATP-driven potassium transport (or Kdp) system, which catalyzes the hydrolysis of ATP coupled with the electrogenic transport of potassium into the cytoplasm. This subunit binds the periplasmic potassium ions and delivers the ions to the membrane domain of KdpB through an intramembrane tunnel. The polypeptide is Potassium-transporting ATPase potassium-binding subunit (Pectobacterium carotovorum subsp. carotovorum (strain PC1)).